The chain runs to 338 residues: MKEQLDGLLQSALKEIDGAGSEEALQELRIKYLGKKGALTAVMKGLGALSAEERPVVGQLANTVKDQLEAHLDETLAQVRDASKRERLQRERLDVTLPGRRLPHGTKHPITLVIEEISEIFAGLGFRVAEGPEVELDFYNFEALNFPKDHPARDMQDTFFVDDSILLRTHTSPVQVRTMLKHAPPVRIISPGTVYRCDSDATHSPMFHQIEGLMVDTGVTFGDLKGILTNFVNQYFGKGIGVRLRPSFFPFTEPSAEVDIACVMCKGKGCRVCKESGWLEILGAGMIDPEVYRHVGYDPETISGFAFGMGVERVAMLKYGIGDLRLFFDNDVRFLQQF.

Glu253 is a binding site for Mg(2+).

The protein belongs to the class-II aminoacyl-tRNA synthetase family. Phe-tRNA synthetase alpha subunit type 1 subfamily. Tetramer of two alpha and two beta subunits. Mg(2+) is required as a cofactor.

It localises to the cytoplasm. The catalysed reaction is tRNA(Phe) + L-phenylalanine + ATP = L-phenylalanyl-tRNA(Phe) + AMP + diphosphate + H(+). The polypeptide is Phenylalanine--tRNA ligase alpha subunit (Geobacter metallireducens (strain ATCC 53774 / DSM 7210 / GS-15)).